A 242-amino-acid polypeptide reads, in one-letter code: uncharacterized protein (242 aa).

A Response regulatory domain is found at 3 to 116 (TALVIDDEQF…RLNKTVKRLN (114 aa)). D54 carries the post-translational modification 4-aspartylphosphate. An HTH LytTR-type domain is found at 139 to 240 (IPCIGHNRIV…LKVLKEMLGI (102 aa)).

This is an uncharacterized protein from Vibrio parahaemolyticus serotype O3:K6 (strain RIMD 2210633).